The following is a 708-amino-acid chain: Pre-mRNA-splicing factor SPP382 (708 aa).

A G-patch domain is found at 61–108 (TYGIGAKLLSSMGYVAGKGLGKDGSGITTPIETQSRPMHNAGLGMFSN).

In terms of assembly, component of the NTR complex (NTC-related complex), composed of NTR1, NTR2 and PRP43. Interacts with CLF1 and NTR2. Interacts with PRP43 and PRP45.

It localises to the cytoplasm. The protein localises to the nucleus. In terms of biological role, involved in pre-mRNA splicing and spliceosome disassembly. Promotes release of excised lariat intron from the spliceosome by acting as a receptor for PRP43. This targeting of PRP43 leads to disassembly of the spliceosome with the separation of the U2, U5, U6 snRNPs and the NTC complex. The chain is Pre-mRNA-splicing factor SPP382 (SPP382) from Saccharomyces cerevisiae (strain ATCC 204508 / S288c) (Baker's yeast).